A 309-amino-acid polypeptide reads, in one-letter code: THO complex subunit Tho3 (309 aa).

WD repeat units follow at residues 22-61 (GQQG…FKFT), 65-107 (GNRG…PIAE), 109-148 (ESNY…IMET), 192-231 (AHNS…CERS), 234-273 (RMDY…QIWK), and 275-309 (PTNG…IFGL).

The protein belongs to the THOC3 family. In terms of assembly, component of the transcription/export (TREX) complex, which is at least is formed of SUB2, TEX1 and YRA1 and the THO complex composed of HPR1, MFT1, THO2 and THP1.

Its subcellular location is the nucleus. In terms of biological role, component of the TREX complex, which operates in coupling transcription elongation to mRNA export. The sequence is that of THO complex subunit Tho3 (THO3) from Schizosaccharomyces pombe (strain 972 / ATCC 24843) (Fission yeast).